Here is an 837-residue protein sequence, read N- to C-terminus: Ribosome-releasing factor 2, mitochondrial (837 aa).

Residues 1-29 (MFSINARTKVPIWVPFIARKGFSMSTRQL) constitute a mitochondrion transit peptide. In terms of domain architecture, tr-type G spans 40-331 (LNTRNIGIIA…GVVDYLPSPL (292 aa)). Residues 49 to 56 (AHIDAGKT), 113 to 117 (DTPGH), and 167 to 170 (NKMD) contribute to the GTP site. Residues 338 to 359 (ITASTSKVSKKQKQKKNSKVSS) are disordered. A compositionally biased stretch (basic residues) spans 345–355 (VSKKQKQKKNS).

The protein belongs to the TRAFAC class translation factor GTPase superfamily. Classic translation factor GTPase family. EF-G/EF-2 subfamily.

Its subcellular location is the mitochondrion. In terms of biological role, mitochondrial GTPase that mediates the disassembly of ribosomes from messenger RNA at the termination of mitochondrial protein biosynthesis. Not involved in the GTP-dependent ribosomal translocation step during translation elongation. The protein is Ribosome-releasing factor 2, mitochondrial of Meyerozyma guilliermondii (strain ATCC 6260 / CBS 566 / DSM 6381 / JCM 1539 / NBRC 10279 / NRRL Y-324) (Yeast).